Here is a 155-residue protein sequence, read N- to C-terminus: uncharacterized protein (155 aa).

One can recognise an N-acetyltransferase domain in the interval 6 to 155 (LRIELGEETN…RDMVRLYLDL (150 aa)). CoA-binding positions include 69–71 (IAV), 77–82 (KKGFGK), and 111–117 (QLSLYQK).

Its function is as follows. Probable N-acetyltransferase. This is an uncharacterized protein from Bacillus subtilis (strain 168).